A 95-amino-acid polypeptide reads, in one-letter code: ESAT-6-like protein EsxH (95 aa).

It belongs to the WXG100 family. ESAT-6 subfamily. Forms a tight 1:1 complex with EsxG.

It is found in the secreted. The protein is ESAT-6-like protein EsxH of Mycolicibacterium smegmatis (strain ATCC 700084 / mc(2)155) (Mycobacterium smegmatis).